The following is a 511-amino-acid chain: Bifunctional purine biosynthesis protein PurH (511 aa).

In terms of domain architecture, MGS-like spans 1-145 (MKKRALVSVS…KNHKFVSVIV (145 aa)).

Belongs to the PurH family.

The catalysed reaction is (6R)-10-formyltetrahydrofolate + 5-amino-1-(5-phospho-beta-D-ribosyl)imidazole-4-carboxamide = 5-formamido-1-(5-phospho-D-ribosyl)imidazole-4-carboxamide + (6S)-5,6,7,8-tetrahydrofolate. It catalyses the reaction IMP + H2O = 5-formamido-1-(5-phospho-D-ribosyl)imidazole-4-carboxamide. The protein operates within purine metabolism; IMP biosynthesis via de novo pathway; 5-formamido-1-(5-phospho-D-ribosyl)imidazole-4-carboxamide from 5-amino-1-(5-phospho-D-ribosyl)imidazole-4-carboxamide (10-formyl THF route): step 1/1. It participates in purine metabolism; IMP biosynthesis via de novo pathway; IMP from 5-formamido-1-(5-phospho-D-ribosyl)imidazole-4-carboxamide: step 1/1. This is Bifunctional purine biosynthesis protein PurH from Bacillus cytotoxicus (strain DSM 22905 / CIP 110041 / 391-98 / NVH 391-98).